We begin with the raw amino-acid sequence, 156 residues long: Endoribonuclease YbeY (156 aa).

3 residues coordinate Zn(2+): histidine 117, histidine 121, and histidine 127.

This sequence belongs to the endoribonuclease YbeY family. Zn(2+) serves as cofactor.

The protein resides in the cytoplasm. Single strand-specific metallo-endoribonuclease involved in late-stage 70S ribosome quality control and in maturation of the 3' terminus of the 16S rRNA. This Shewanella halifaxensis (strain HAW-EB4) protein is Endoribonuclease YbeY.